The primary structure comprises 338 residues: Ketol-acid reductoisomerase (NADP(+)) (338 aa).

In terms of domain architecture, KARI N-terminal Rossmann spans 1-181 (MRVYYDKDCD…GGGRSGIIET (181 aa)). Residues 24-27 (YGSQ), Arg47, Ser50, Ser52, and 82-85 (DENQ) each bind NADP(+). The active site involves His107. Gly133 lines the NADP(+) pocket. The KARI C-terminal knotted domain maps to 182–327 (TFKDETETDL…EKLRGMMPWI (146 aa)). Mg(2+) contacts are provided by Asp190, Glu194, Glu226, and Glu230. Ser251 contributes to the substrate binding site.

This sequence belongs to the ketol-acid reductoisomerase family. Mg(2+) is required as a cofactor.

It carries out the reaction (2R)-2,3-dihydroxy-3-methylbutanoate + NADP(+) = (2S)-2-acetolactate + NADPH + H(+). It catalyses the reaction (2R,3R)-2,3-dihydroxy-3-methylpentanoate + NADP(+) = (S)-2-ethyl-2-hydroxy-3-oxobutanoate + NADPH + H(+). Its pathway is amino-acid biosynthesis; L-isoleucine biosynthesis; L-isoleucine from 2-oxobutanoate: step 2/4. It functions in the pathway amino-acid biosynthesis; L-valine biosynthesis; L-valine from pyruvate: step 2/4. Its function is as follows. Involved in the biosynthesis of branched-chain amino acids (BCAA). Catalyzes an alkyl-migration followed by a ketol-acid reduction of (S)-2-acetolactate (S2AL) to yield (R)-2,3-dihydroxy-isovalerate. In the isomerase reaction, S2AL is rearranged via a Mg-dependent methyl migration to produce 3-hydroxy-3-methyl-2-ketobutyrate (HMKB). In the reductase reaction, this 2-ketoacid undergoes a metal-dependent reduction by NADPH to yield (R)-2,3-dihydroxy-isovalerate. The sequence is that of Ketol-acid reductoisomerase (NADP(+)) from Chromohalobacter salexigens (strain ATCC BAA-138 / DSM 3043 / CIP 106854 / NCIMB 13768 / 1H11).